A 266-amino-acid chain; its full sequence is METLKSNKARLEYLINDMHRERNDNDVLVMPSSFEDLWELYRGLANVRPALPVSDEYLAVQDAMLSDLNRQHVTDLKDLKPIKGDNIFVWQGDITTLKIDAIVNAANSRFLGCMQANHDCIDNIIHTKAGVQVRLDCAEIIRQQGRNEGVGKAKITRGYNLSAKYIIHTVGPQIRRLPVSKMNQDLLAKCYLSCLKLADQHSLNHVAFCCISTGVFAFPQDEAAEIAVRTVESYLKETNSTLKVVFNVFTDKDLQLYKEAFNRDAE.

The Macro domain occupies 74–265 (TDLKDLKPIK…LYKEAFNRDA (192 aa)). Positions 93, 94, and 107 each coordinate ADP-D-ribose. Residues C113, H118, and C120 each contribute to the Zn(2+) site. Positions 120, 121, 122, 212, 213, 214, and 216 each coordinate ADP-D-ribose.

This sequence belongs to the MacroD-type family. Zn-Macro subfamily. Zn(2+) is required as a cofactor.

It carries out the reaction 4-O-(ADP-D-ribosyl)-L-aspartyl-[protein] + H2O = L-aspartyl-[protein] + ADP-D-ribose + H(+). Its function is as follows. ADP-ribosylhydrolase that specifically reverses the SirTM-mediated mono-ADP-ribosylation at an asparatate residue of GcvH-L, by releasing ADP-ribose from the target protein. May play a role in the regulation of the response to host-induced oxidative stress. This chain is Protein-ADP-ribose hydrolase, found in Staphylococcus aureus (strain COL).